The sequence spans 421 residues: Queuine tRNA-ribosyltransferase accessory subunit 2 (421 aa).

Cys328, Cys330, Cys333, and His359 together coordinate Zn(2+).

This sequence belongs to the queuine tRNA-ribosyltransferase family. QTRT2 subfamily. As to quaternary structure, heterodimer of a catalytic subunit and an accessory subunit. It depends on Zn(2+) as a cofactor.

It is found in the cytoplasm. Functionally, non-catalytic subunit of the queuine tRNA-ribosyltransferase (TGT) that catalyzes the base-exchange of a guanine (G) residue with queuine (Q) at position 34 (anticodon wobble position) in tRNAs with GU(N) anticodons (tRNA-Asp, -Asn, -His and -Tyr), resulting in the hypermodified nucleoside queuosine (7-(((4,5-cis-dihydroxy-2-cyclopenten-1-yl)amino)methyl)-7-deazaguanosine). The protein is Queuine tRNA-ribosyltransferase accessory subunit 2 of Aedes aegypti (Yellowfever mosquito).